An 846-amino-acid chain; its full sequence is MESGPRVEPGPGAPAAVLARIPQEPRPSPEGDPSPPPPPTPMSALVPDTPPDTPPALKTATNPKQLPLEPGNPTGQISPQPAPPQEECPSSEAKSRGPTPTATGPREAKPSRRSSQPSPTTVPASDSPPAKQDVKKAGERHKLAKERREERAKYLAAKKAVWLEKEEKAKALREKQLQERRRRLEEQRLKAEQRRAALEERQRQKLEKNKERYEAAIQRSVKKTWAEIRQQRWSWAGALHHSSPGRKTSGSRCSVSAVNLPKHVDSIINKRLSKSSATLWNSPSRNRSLQLSAWESSIVDRLMTPTLSFLARSRSAVTLPRNGRDQGRGSGPGRRPTRARAGASLAPGPHPDRTHPSAAVPVCPRSASASPLTPCSAPRSAHRCTPSGERPERRKPGAGGSPALARRRLEATPVQKKEKKDKERENEKEKSALARERNLKKRQSLPASIRPRLSTGSELSPKSKARPSSPSTTWHRPASPCPSPGPGHALPPKPPSPRGTTASPKGRVRRKEEAKESPSPSGPEDKNHRKSRAAEEKEPAAPASPAPSPVPSPTPAQPQKEQSSTQIPAETAVPAVPAAPTAPPTAAPSVTPSKPMAGTTDREEATRLLAEKRRQAREQREREEQERKLQAERDKRMREEQLAREAEARAEREAEARRREEQEAREKAQAEQEEQERLQKQKEEAEARSREEAERQRQEREKHFQKEEQERQERRKRLEEIMKRTRKSEAAETKKQDAKETAANNSGPDPVKAVETRPSGLQKDSMQKEELAPQEPQWSLPSKEMPGSLVNGLQPLPAHQENGFSPKGTAGDKSLGRTAEGLLPFAEAEAFLKKAVVQPPQVTEVL.

Disordered stretches follow at residues 1-153 (MESG…ERAK) and 186-210 (EQRLKAEQRRAALEERQRQKLEKNK). The segment covering 24–41 (EPRPSPEGDPSPPPPPTP) has biased composition (pro residues). A phosphothreonine mark is found at threonine 49 and threonine 53. Serine 95 carries the phosphoserine modification. Threonine 99 carries the post-translational modification Phosphothreonine. Over residues 113-123 (RSSQPSPTTVP) the composition is skewed to low complexity. Phosphoserine occurs at positions 115 and 118. Position 120 is a phosphothreonine (threonine 120). Serine 125 and serine 127 each carry phosphoserine. Residues 130-224 (AKQDVKKAGE…AAIQRSVKKT (95 aa)) adopt a coiled-coil conformation. A compositionally biased stretch (basic and acidic residues) spans 132–153 (QDVKKAGERHKLAKERREERAK). Phosphoserine is present on residues serine 256, serine 275, serine 315, serine 368, and serine 401. Positions 318-816 (TLPRNGRDQG…KGTAGDKSLG (499 aa)) are disordered. Residues 407–437 (RRLEATPVQKKEKKDKERENEKEKSALARER) show a composition bias toward basic and acidic residues. A coiled-coil region spans residues 414–443 (VQKKEKKDKERENEKEKSALARERNLKKRQ). Residues serine 444, serine 448, serine 454, and serine 460 each carry the phosphoserine modification. The span at 460–471 (SPKSKARPSSPS) shows a compositional bias: low complexity. Lysine 462 is covalently cross-linked (Glycyl lysine isopeptide (Lys-Gly) (interchain with G-Cter in SUMO2)). Residues serine 479 and serine 496 each carry the phosphoserine modification. Positions 479-497 (SPCPSPGPGHALPPKPPSP) are enriched in pro residues. The segment covering 523–539 (PEDKNHRKSRAAEEKEP) has biased composition (basic and acidic residues). Pro residues predominate over residues 542–556 (PASPAPSPVPSPTPA). Residues serine 544, serine 548, and serine 552 each carry the phosphoserine modification. A Phosphothreonine modification is found at threonine 554. Positions 568–579 (PAETAVPAVPAA) are enriched in low complexity. Positions 599 to 740 (TTDREEATRL…AETKKQDAKE (142 aa)) form a coiled coil. Residues 600-740 (TDREEATRLL…AETKKQDAKE (141 aa)) are compositionally biased toward basic and acidic residues. A Phosphothreonine modification is found at threonine 818.

Belongs to the MAP7 family.

It localises to the cytoplasm. Its subcellular location is the cytoskeleton. The protein localises to the spindle. It is found in the microtubule organizing center. The protein resides in the centrosome. It localises to the midbody. In terms of biological role, microtubule-stabilizing protein involved in the control of cell motility and neurite outgrowth. Facilitate microtubule stabilization through the maintenance of acetylated stable microtubules. In Mus musculus (Mouse), this protein is MAP7 domain-containing protein 1 (Map7d1).